The primary structure comprises 312 residues: Ribosomal RNA small subunit methyltransferase H (312 aa).

S-adenosyl-L-methionine is bound by residues 32-34 (AGH), aspartate 52, phenylalanine 79, aspartate 100, and glutamine 107.

The protein belongs to the methyltransferase superfamily. RsmH family.

The protein resides in the cytoplasm. The enzyme catalyses cytidine(1402) in 16S rRNA + S-adenosyl-L-methionine = N(4)-methylcytidine(1402) in 16S rRNA + S-adenosyl-L-homocysteine + H(+). Its function is as follows. Specifically methylates the N4 position of cytidine in position 1402 (C1402) of 16S rRNA. The chain is Ribosomal RNA small subunit methyltransferase H from Listeria monocytogenes serovar 1/2a (strain ATCC BAA-679 / EGD-e).